The following is a 307-amino-acid chain: Leucine-rich repeat-containing protein 59 (307 aa).

N-acetylmethionine is present on M1. T2 carries the post-translational modification N-acetylthreonine; in Leucine-rich repeat-containing protein 59, N-terminally processed. The Cytoplasmic segment spans residues 2–244; the sequence is TKTGSKGGNL…KPPPRKHNRS (243 aa). LRR repeat units follow at residues 10–31, 40–62, 63–84, 86–107, and 109–128; these read NLRD…NEVP, KATV…CGLT, HLVK…FGRL, NLQH…FAQL, and NLKW…AKVA. S23 and S25 each carry phosphoserine. K73 bears the N6-succinyllysine mark. K135 is subject to N6-acetyllysine. Residues 148-216 are a coiled coil; it reads MKAVQADQER…KASKREQEKK (69 aa). The tract at residues 150–242 is disordered; the sequence is AVQADQERER…PRKPPPRKHN (93 aa). The span at 154-221 shows a compositional bias: basic and acidic residues; it reads DQERERQRRL…EQEKKPKKET (68 aa). Basic residues predominate over residues 229–242; sequence SGSRPRKPPPRKHN. A helical transmembrane segment spans residues 245 to 265; that stretch reads WAVLKGLLLLLLLCVAGGLVV. Residues 266–307 are Lumenal-facing; sequence CRVTGLQQQPLCTSVNAIYDNAVQGLRHHEILQWVLQTDSQQ.

Can form homodimers. Interacts with SGO1. Interacts with FGF1.

Its subcellular location is the microsome membrane. The protein localises to the endoplasmic reticulum membrane. It localises to the nucleus envelope. Functionally, required for nuclear import of FGF1, but not that of FGF2. Might regulate nuclear import of exogenous FGF1 by facilitating interaction with the nuclear import machinery and by transporting cytosolic FGF1 to, and possibly through, the nuclear pores. This Rattus norvegicus (Rat) protein is Leucine-rich repeat-containing protein 59 (Lrrc59).